Here is a 651-residue protein sequence, read N- to C-terminus: NADH oxidase (651 aa).

Glutamine 104 is an FMN binding site. Residue tyrosine 175 is the Proton donor of the active site. Residues arginine 223 and 320–321 (GR) each bind FMN. The [4Fe-4S] cluster site is built by cysteine 344, cysteine 347, cysteine 351, and cysteine 364. 5 residues coordinate FAD: alanine 396, glutamate 415, glutamine 423, lysine 433, and alanine 460.

It in the N-terminal section; belongs to the NADH:flavin oxidoreductase/NADH oxidase family. As to quaternary structure, homohexamer. It depends on FMN as a cofactor. FAD serves as cofactor. Requires [4Fe-4S] cluster as cofactor. In terms of processing, the N-terminus is blocked.

The enzyme catalyses A + NADH + H(+) = AH2 + NAD(+). Reduces a range of alternative electron acceptors. This chain is NADH oxidase, found in Thermoanaerobacter brockii (Thermoanaerobium brockii).